A 191-amino-acid polypeptide reads, in one-letter code: Protein Ves (191 aa).

The protein belongs to the Ves family.

The polypeptide is Protein Ves (Escherichia coli O8 (strain IAI1)).